Reading from the N-terminus, the 505-residue chain is Lysine--tRNA ligase (505 aa).

The Mg(2+) site is built by glutamate 415 and glutamate 422.

It belongs to the class-II aminoacyl-tRNA synthetase family. Homodimer. The cofactor is Mg(2+).

The protein localises to the cytoplasm. It catalyses the reaction tRNA(Lys) + L-lysine + ATP = L-lysyl-tRNA(Lys) + AMP + diphosphate. This is Lysine--tRNA ligase from Pectobacterium atrosepticum (strain SCRI 1043 / ATCC BAA-672) (Erwinia carotovora subsp. atroseptica).